The following is an 89-amino-acid chain: Translation initiation factor IF-1, chloroplastic (89 aa).

Residues 1–72 enclose the S1-like domain; the sequence is MKKQDLIDME…TKGRIIYRLR (72 aa).

The protein belongs to the IF-1 family. In terms of assembly, component of the 30S ribosomal translation pre-initiation complex which assembles on the 30S ribosome in the order IF-2 and IF-3, IF-1 and N-formylmethionyl-tRNA(fMet); mRNA recruitment can occur at any time during PIC assembly.

Its subcellular location is the plastid. The protein resides in the chloroplast. One of the essential components for the initiation of protein synthesis. Stabilizes the binding of IF-2 and IF-3 on the 30S subunit to which N-formylmethionyl-tRNA(fMet) subsequently binds. Helps modulate mRNA selection, yielding the 30S pre-initiation complex (PIC). Upon addition of the 50S ribosomal subunit IF-1, IF-2 and IF-3 are released leaving the mature 70S translation initiation complex. The protein is Translation initiation factor IF-1, chloroplastic of Angiopteris evecta (Mule's foot fern).